The sequence spans 227 residues: 27 kDa glycoprotein (227 aa).

Positions 1-17 are cleaved as a signal peptide; that stretch reads MMWKTVLITIFAAGVLA. Asparagine 118 and asparagine 173 each carry an N-linked (GlcNAc...) asparagine glycan.

Belongs to the UPF0408 family. In terms of tissue distribution, expressed in the subesophageal body, fat bodies, hemocytes, midgut and Malpighian tubules. Not expressed in silk glands.

The protein localises to the secreted. The protein is 27 kDa glycoprotein of Bombyx mori (Silk moth).